The primary structure comprises 77 residues: Conotoxin Bt6.6 (77 aa).

The signal sequence occupies residues 1 to 19; that stretch reads MEKLTILLLVAAVLMSTQA. A propeptide spanning residues 20–38 is cleaved from the precursor; sequence LIQSDGEKRQQAKINFLSX. 3 cysteine pairs are disulfide-bonded: C51–C65, C58–C69, and C64–C74.

This sequence belongs to the conotoxin O2 superfamily. Expressed by the venom duct.

It is found in the secreted. This chain is Conotoxin Bt6.6, found in Conus betulinus (Beech cone).